Reading from the N-terminus, the 329-residue chain is Serine/threonine-protein phosphatase PP2A catalytic subunit (329 aa).

Positions 1–25 are disordered; that stretch reads MDNNMEIDAARSPEPHHLSPTTDPG. A compositionally biased stretch (basic and acidic residues) spans 8-17; sequence DAARSPEPHH. Mn(2+) contacts are provided by Asp77, His79, Asp105, and Asn137. His138 (proton donor) is an active-site residue. His187 and His261 together coordinate Mn(2+). At Leu329 the chain carries Leucine methyl ester.

Belongs to the PPP phosphatase family. PP-2A subfamily. Requires Mn(2+) as cofactor.

It catalyses the reaction O-phospho-L-seryl-[protein] + H2O = L-seryl-[protein] + phosphate. The catalysed reaction is O-phospho-L-threonyl-[protein] + H2O = L-threonyl-[protein] + phosphate. Functionally, involved in hyphal morphogenesis. This is Serine/threonine-protein phosphatase PP2A catalytic subunit (pphA) from Emericella nidulans (strain FGSC A4 / ATCC 38163 / CBS 112.46 / NRRL 194 / M139) (Aspergillus nidulans).